Here is a 235-residue protein sequence, read N- to C-terminus: Matrix protein (235 aa).

It belongs to the nucleorhabdovirus type-2 matrix protein family. In terms of assembly, homomultimer. Interacts with nucleoprotein and with the cytoplasmic domain of glycoprotein.

It is found in the virion membrane. Its subcellular location is the host endomembrane system. Plays a major role in assembly and budding of virion. Completely covers the ribonucleoprotein coil and keep it in condensed bullet-shaped form. Inhibits viral transcription and stimulates replication. The polypeptide is Matrix protein (M) (Rottboellia (Sorghum)).